We begin with the raw amino-acid sequence, 468 residues long: Tissue alpha-L-fucosidase (468 aa).

Positions 1–22 (MRSWVVGARLLLLLQLVLVLGA) are cleaved as a signal peptide. Residue T173 is modified to Phosphothreonine. N-linked (GlcNAc...) asparagine glycans are attached at residues N244, N271, and N320.

This sequence belongs to the glycosyl hydrolase 29 family. As to quaternary structure, homotetramer.

It localises to the lysosome. The enzyme catalyses an alpha-L-fucoside + H2O = L-fucose + an alcohol. The catalysed reaction is a neolactoside IV(2)-alpha-Fuc-nLc4Cer(d18:1(4E)) + H2O = a neolactoside nLc4Cer(d18:1(4E)) + L-fucose. It carries out the reaction a neolactoside IV(2)-alpha-Fuc-nLc4Cer(d18:0) + H2O = a neolactoside nLc4Cer(d18:0) + L-fucose. Its function is as follows. Alpha-L-fucosidase is responsible for hydrolyzing the alpha-1,6-linked fucose joined to the reducing-end N-acetylglucosamine of the carbohydrate moieties of glycoproteins. In Bos taurus (Bovine), this protein is Tissue alpha-L-fucosidase (FUCA1).